Reading from the N-terminus, the 481-residue chain is Matrilin-3 (481 aa).

A signal peptide spans 1–27; that stretch reads MLLSAPLRHLPGLLLLLWPLLLLPSLA. Positions 78 to 253 constitute a VWFA domain; the sequence is DLVFIIDSSR…GVIEKLSARF (176 aa). Residue Arg-193 is modified to Omega-N-methylarginine. EGF-like domains follow at residues 259–300, 301–342, 343–384, and 385–426; these read ALDQ…KTCS, AIDK…RTCA, ALDK…KTCS, and VRNK…KTCS. 12 disulfides stabilise this stretch: Cys-263–Cys-274, Cys-270–Cys-284, Cys-286–Cys-299, Cys-305–Cys-316, Cys-312–Cys-326, Cys-328–Cys-341, Cys-347–Cys-358, Cys-354–Cys-368, Cys-370–Cys-383, Cys-389–Cys-400, Cys-396–Cys-410, and Cys-412–Cys-425. Asn-321 is a glycosylation site (N-linked (GlcNAc...) asparagine). Position 436 is a phosphoserine; by FAM20C (Ser-436). A coiled-coil region spans residues 451-475; that stretch reads EKVSSHLQKLNTKLDNILKKLKVTE.

Can form homooligomers (monomers, dimers, trimers and tetramers) and heterooligomers with matrilin-1. Interacts with COMP. Component of a complex containing at least CRELD2, MANF, MATN3 and PDIA4. In terms of tissue distribution, strongly expressed in growing skeletal tissue such as epiphyseal growth plate or in bone undergoing growth and remodeling. In the bone, actively synthesized in osteoblasts and osteocytes. Expressed in cartilage of sternum, femur, vertebrae, trachea, articular and epiphyseal cartilage, cartilage of developing bones and bones.

It localises to the secreted. Functionally, major component of the extracellular matrix of cartilage and may play a role in the formation of extracellular filamentous networks. The polypeptide is Matrilin-3 (Matn3) (Mus musculus (Mouse)).